The following is a 155-amino-acid chain: CASP-like protein 5B2 (155 aa).

Residues 1–18 lie on the Cytoplasmic side of the membrane; the sequence is MWEVAWWRPGTWGGLAMR. A helical membrane pass occupies residues 19–39; it reads VGQVAFAGASIGVMASGAGFA. N40 carries N-linked (GlcNAc...) asparagine glycosylation. At 40-43 the chain is on the extracellular side; that stretch reads NYTA. A helical membrane pass occupies residues 44 to 64; the sequence is FCYLIASMGLQSLWSLGLACL. The Cytoplasmic segment spans residues 65-77; the sequence is DVYALTVKRDLNN. A helical transmembrane segment spans residues 78-98; sequence ALLVSLFVIGDWVTALLSFAA. The Extracellular portion of the chain corresponds to 99 to 128; sequence SCSAGGVMVLFKRDVLFCRRYPQLPCGRFE. Residues 129 to 149 form a helical membrane-spanning segment; that stretch reads LAVALAFLSWALSATSAIIMF. The Cytoplasmic segment spans residues 150–155; it reads CLLAAF.

It belongs to the Casparian strip membrane proteins (CASP) family. As to quaternary structure, homodimer and heterodimers.

The protein localises to the cell membrane. The sequence is that of CASP-like protein 5B2 from Oryza sativa subsp. indica (Rice).